The primary structure comprises 430 residues: Flavin-dependent monooxygenase eupH (430 aa).

Residues alanine 11–glycine 14, glutamate 33–arginine 34, glutamine 43, arginine 107, tyrosine 282, and aspartate 306 each bind FAD.

This sequence belongs to the aromatic-ring hydroxylase family. FAD serves as cofactor.

The protein operates within secondary metabolite biosynthesis; terpenoid biosynthesis. Its function is as follows. Flavin-dependent monooxygenase; part of the gene cluster that mediates the biosynthesis of eupenifeldin, a bistropolone meroterpenoid that acts as an antitumor agent. The first step of eupenifeldin biosynthesis is the biosynthesis of 3-methylorcinaldehyde performed by the non-reducing polyketide synthase eupA. Oxidative dearomatization of 3-methylorcinaldehyde likely catalyzed by the FAD-dependent monooxygenase eupB is followed by oxidative ring expansion by the 2-oxoglutarate-dependent dioxygenase eupC to provide the first tropolone metabolite, tropolone stipitaldehyde. In parallel, generation of sesquiterpene alpha-humulene from farnesylpyrophosphate (FPP) is catalyzed by the terpene cyclase eupE. The cytochrome P450 monooxygenase eupD then hydroxylates humulene to humulenol. The putative Diels-Alderase eupF probably catalyzes the formation of the tropolone-humulene skeleton by linking humulenol and the polyketide moiety. The short-chain dehydrogenase/reductase eupG and the flavin-dependent monooxygenase eupH are also essential for eupenifeldin biosynthesis and are likely the additional decorating enzymes of the tropolone-humulene skeleton to produce final eupenifeldin or derivatives. This is Flavin-dependent monooxygenase eupH from Phoma sp.